Here is a 208-residue protein sequence, read N- to C-terminus: Ribosomal RNA large subunit methyltransferase E (208 aa).

Residues Gly61, Trp63, Asp81, Asp97, and Asp122 each coordinate S-adenosyl-L-methionine. Residue Lys162 is the Proton acceptor of the active site.

The protein belongs to the class I-like SAM-binding methyltransferase superfamily. RNA methyltransferase RlmE family.

The protein localises to the cytoplasm. The enzyme catalyses uridine(2552) in 23S rRNA + S-adenosyl-L-methionine = 2'-O-methyluridine(2552) in 23S rRNA + S-adenosyl-L-homocysteine + H(+). Functionally, specifically methylates the uridine in position 2552 of 23S rRNA at the 2'-O position of the ribose in the fully assembled 50S ribosomal subunit. The protein is Ribosomal RNA large subunit methyltransferase E of Pseudomonas putida (strain GB-1).